A 547-amino-acid polypeptide reads, in one-letter code: Glucose-6-phosphate isomerase 2 (547 aa).

The Proton donor role is filled by Glu-351. Active-site residues include His-382 and Lys-508.

It belongs to the GPI family.

It is found in the cytoplasm. It carries out the reaction alpha-D-glucose 6-phosphate = beta-D-fructose 6-phosphate. It participates in carbohydrate biosynthesis; gluconeogenesis. It functions in the pathway carbohydrate degradation; glycolysis; D-glyceraldehyde 3-phosphate and glycerone phosphate from D-glucose: step 2/4. Catalyzes the reversible isomerization of glucose-6-phosphate to fructose-6-phosphate. In Neisseria gonorrhoeae (strain ATCC 700825 / FA 1090), this protein is Glucose-6-phosphate isomerase 2.